Here is a 197-residue protein sequence, read N- to C-terminus: Ribosomal RNA large subunit methyltransferase E (197 aa).

5 residues coordinate S-adenosyl-L-methionine: Gly50, Trp52, Asp70, Asp88, and Asp111. The active-site Proton acceptor is the Lys151.

This sequence belongs to the class I-like SAM-binding methyltransferase superfamily. RNA methyltransferase RlmE family.

Its subcellular location is the cytoplasm. The enzyme catalyses uridine(2552) in 23S rRNA + S-adenosyl-L-methionine = 2'-O-methyluridine(2552) in 23S rRNA + S-adenosyl-L-homocysteine + H(+). In terms of biological role, specifically methylates the uridine in position 2552 of 23S rRNA at the 2'-O position of the ribose in the fully assembled 50S ribosomal subunit. The chain is Ribosomal RNA large subunit methyltransferase E from Syntrophobacter fumaroxidans (strain DSM 10017 / MPOB).